A 257-amino-acid chain; its full sequence is Nickel import system ATP-binding protein NikD (257 aa).

In terms of domain architecture, ABC transporter spans isoleucine 4 to isoleucine 245. Glycine 37–serine 44 provides a ligand contact to ATP.

This sequence belongs to the ABC transporter superfamily. As to quaternary structure, the complex is composed of two ATP-binding proteins (NikD and NikE), two transmembrane proteins (NikB and NikC) and a solute-binding protein (NikA).

It is found in the cell membrane. It catalyses the reaction Ni(2+)(out) + ATP + H2O = Ni(2+)(in) + ADP + phosphate + H(+). Functionally, part of the ABC transporter complex NikABCDE (Opp2) involved in nickel import. Probably responsible for energy coupling to the transport system. The chain is Nickel import system ATP-binding protein NikD from Staphylococcus aureus (strain bovine RF122 / ET3-1).